We begin with the raw amino-acid sequence, 829 residues long: Pre-mRNA-splicing factor syf1 (829 aa).

HAT repeat units lie at residues 15 to 47, 49 to 81, 93 to 125, 127 to 161, 163 to 182, 277 to 312, 380 to 418, 420 to 456, 473 to 505, 544 to 578, 581 to 615, and 689 to 723; these read SLVS…YKLQ, GTVQ…FRTK, SEYQ…FLMQ, PLVT…FANS, EGET…PEDA, GSFE…FEES, DNKE…FYEA, GDLS…MELR, APKR…YVDL, KYFE…KAVD, ISIE…LEEE, and GEID…FEVQ. Residues 799 to 829 form a disordered region; it reads AASEGPKGGSMPVQPVEVHNPDAIDLDEMDE.

It belongs to the crooked-neck family. Associated with the spliceosome.

Its subcellular location is the nucleus. Involved in pre-mRNA splicing and cell cycle progression. The chain is Pre-mRNA-splicing factor syf1 (msp-41) from Neurospora crassa (strain ATCC 24698 / 74-OR23-1A / CBS 708.71 / DSM 1257 / FGSC 987).